The chain runs to 1329 residues: BRCT domain-containing protein At4g02110 (1329 aa).

2 consecutive BRCT domains span residues 7–97 (LPPK…SILY) and 104–194 (NGIP…DYEI). 5 disordered regions span residues 295-378 (ANKT…SMER), 393-470 (GEEF…TSEL), 576-645 (EVPE…SPTD), 745-827 (NDVP…ADGK), and 952-1077 (AKKE…KESK). 2 stretches are compositionally biased toward polar residues: residues 323–335 (SLAT…LQRS) and 363–378 (SAFN…SMER). Composition is skewed to basic and acidic residues over residues 410 to 422 (VSRK…HHNS) and 600 to 611 (RMKDKQETELTT). The segment covering 793-802 (GKSRVKKTKI) has biased composition (basic residues). 2 stretches are compositionally biased toward basic and acidic residues: residues 818–827 (DGGDNSADGK) and 971–983 (DDNK…EGIV). Over residues 986–1004 (SSLQSGKKGSSSRVEVGKS) the composition is skewed to low complexity. Positions 1024-1047 (VMKDVGDNSAKEKENIAVDNESRK) are enriched in basic and acidic residues. One can recognise a BRCT 3 domain in the interval 1090–1181 (FQDQEHEPKF…KLLQEEPYEW (92 aa)).

In Arabidopsis thaliana (Mouse-ear cress), this protein is BRCT domain-containing protein At4g02110.